The chain runs to 200 residues: Recombination protein RecR (200 aa).

The C4-type zinc finger occupies 57 to 72; sequence CRSCRTLTEEELCPQC. In terms of domain architecture, Toprim spans 80–175; it reads TLLCVVEGPT…VASRIAHGVP (96 aa).

Belongs to the RecR family.

May play a role in DNA repair. It seems to be involved in an RecBC-independent recombinational process of DNA repair. It may act with RecF and RecO. This Pseudomonas savastanoi pv. phaseolicola (strain 1448A / Race 6) (Pseudomonas syringae pv. phaseolicola (strain 1448A / Race 6)) protein is Recombination protein RecR.